A 212-amino-acid chain; its full sequence is Orotate phosphoribosyltransferase (212 aa).

Residue Lys-26 coordinates 5-phospho-alpha-D-ribose 1-diphosphate. 34–35 contributes to the orotate binding site; it reads FF. 5-phospho-alpha-D-ribose 1-diphosphate contacts are provided by residues 72-73, Arg-99, Lys-100, Lys-103, His-105, and 124-132; these read YK and DDVITVGTA. The orotate site is built by Thr-128 and Arg-156.

The protein belongs to the purine/pyrimidine phosphoribosyltransferase family. PyrE subfamily. As to quaternary structure, homodimer. Mg(2+) serves as cofactor.

The catalysed reaction is orotidine 5'-phosphate + diphosphate = orotate + 5-phospho-alpha-D-ribose 1-diphosphate. The protein operates within pyrimidine metabolism; UMP biosynthesis via de novo pathway; UMP from orotate: step 1/2. Catalyzes the transfer of a ribosyl phosphate group from 5-phosphoribose 1-diphosphate to orotate, leading to the formation of orotidine monophosphate (OMP). This chain is Orotate phosphoribosyltransferase, found in Ruthia magnifica subsp. Calyptogena magnifica.